Reading from the N-terminus, the 187-residue chain is MKLIVGLGNPGDKYKFTRHNVGFLVIDLICQKLKITLDKEKTHGSYAKFEDFIIAKPNTYMNLSGNFVLELANFFKIAPDDILVIHDEKDFELGKSAIKIGGSGGSHNGVLDVINKLNTQNFKRLKIGIGQNQEMALKDYVLQRFSLEEFSVLEPVLNQAADVCIQYSFNDIHYLMNKYNQKKKNGN.

Y14 serves as a coordination point for tRNA. Residue H19 is the Proton acceptor of the active site. Residues Y60, N62, and N108 each coordinate tRNA.

Belongs to the PTH family. As to quaternary structure, monomer.

The protein localises to the cytoplasm. The enzyme catalyses an N-acyl-L-alpha-aminoacyl-tRNA + H2O = an N-acyl-L-amino acid + a tRNA + H(+). In terms of biological role, hydrolyzes ribosome-free peptidyl-tRNAs (with 1 or more amino acids incorporated), which drop off the ribosome during protein synthesis, or as a result of ribosome stalling. Catalyzes the release of premature peptidyl moieties from peptidyl-tRNA molecules trapped in stalled 50S ribosomal subunits, and thus maintains levels of free tRNAs and 50S ribosomes. This Mycoplasmopsis synoviae (strain 53) (Mycoplasma synoviae) protein is Peptidyl-tRNA hydrolase.